Here is a 458-residue protein sequence, read N- to C-terminus: Repulsive guidance molecule A (458 aa).

The signal sequence occupies residues methionine 1–threonine 53. Positions serine 54–aspartate 176 are cleaved as a propeptide — removed in mature form. Residues histidine 121–arginine 133 show a composition bias toward polar residues. The interval histidine 121 to serine 149 is disordered. Asparagine 122 and asparagine 167 each carry an N-linked (GlcNAc...) asparagine glycan. Cystine bridges form between cysteine 153–cysteine 234 and cysteine 171–cysteine 323. Asparagine 397 carries N-linked (GlcNAc...) asparagine glycosylation. Alanine 433 carries GPI-anchor amidated alanine lipidation. The propeptide at alanine 434–cysteine 458 is removed in mature form.

The protein belongs to the repulsive guidance molecule (RGM) family. Interacts with NEO1, BMP2 and BMP4. In terms of processing, autocatalytically cleaved at low pH; the two chains remain linked via two disulfide bonds.

It is found in the cell membrane. In terms of biological role, member of the repulsive guidance molecule (RGM) family that performs several functions in the developing and adult nervous system. Regulates cephalic neural tube closure, inhibits neurite outgrowth and cortical neuron branching, and the formation of mature synapses. Binding to its receptor NEO1/neogenin induces activation of RHOA-ROCK1/Rho-kinase signaling pathway through UNC5B-ARHGEF12/LARG-PTK2/FAK1 cascade, leading to collapse of the neuronal growth cone and neurite outgrowth inhibition. Furthermore, RGMA binding to NEO1/neogenin leads to HRAS inactivation by influencing HRAS-PTK2/FAK1-AKT1 pathway. It also functions as a bone morphogenetic protein (BMP) coreceptor that may signal through SMAD1, SMAD5, and SMAD8. The sequence is that of Repulsive guidance molecule A (RGMA) from Macaca fascicularis (Crab-eating macaque).